Consider the following 130-residue polypeptide: Small ribosomal subunit protein uS9 (130 aa).

Residues 109-130 (RKKERKKYGQPGARAKFQYSKR) are disordered.

It belongs to the universal ribosomal protein uS9 family.

This chain is Small ribosomal subunit protein uS9, found in Maridesulfovibrio salexigens (strain ATCC 14822 / DSM 2638 / NCIMB 8403 / VKM B-1763) (Desulfovibrio salexigens).